A 256-amino-acid chain; its full sequence is Protein FixA (256 aa).

It belongs to the ETF beta-subunit/FixA family. In terms of assembly, heterodimer of FixA and FixB.

The protein operates within amine and polyamine metabolism; carnitine metabolism. Functionally, required for anaerobic carnitine reduction. May bring reductant to CaiA. In Escherichia coli O6:H1 (strain CFT073 / ATCC 700928 / UPEC), this protein is Protein FixA.